Reading from the N-terminus, the 1070-residue chain is DNA-directed RNA polymerase subunit beta (1070 aa).

The protein belongs to the RNA polymerase beta chain family. In plastids the minimal PEP RNA polymerase catalytic core is composed of four subunits: alpha, beta, beta', and beta''. When a (nuclear-encoded) sigma factor is associated with the core the holoenzyme is formed, which can initiate transcription.

It localises to the plastid. The protein resides in the chloroplast. It carries out the reaction RNA(n) + a ribonucleoside 5'-triphosphate = RNA(n+1) + diphosphate. DNA-dependent RNA polymerase catalyzes the transcription of DNA into RNA using the four ribonucleoside triphosphates as substrates. This chain is DNA-directed RNA polymerase subunit beta, found in Chaetosphaeridium globosum (Charophycean green alga).